A 357-amino-acid chain; its full sequence is Trans-resveratrol di-O-methyltransferase (357 aa).

S-adenosyl-L-methionine contacts are provided by Gly-200, Asp-223, Asp-243, Met-244, and Lys-257. His-261 acts as the Proton acceptor in catalysis.

Belongs to the class I-like SAM-binding methyltransferase superfamily. Cation-independent O-methyltransferase family. COMT subfamily.

It carries out the reaction trans-resveratrol + 2 S-adenosyl-L-methionine = pterostilbene + 2 S-adenosyl-L-homocysteine + 2 H(+). Functionally, catalyzes the biosynthesis of pterostilbene from resveratrol. Pterostilbene has both antifungal and pharmacological properties. Also has activity toward resveratrol monomethyl ether (RME). In Vitis vinifera (Grape), this protein is Trans-resveratrol di-O-methyltransferase (ROMT).